Here is a 132-residue protein sequence, read N- to C-terminus: UPF0299 membrane protein YohJ (132 aa).

4 consecutive transmembrane segments (helical) span residues 7-27, 31-51, 63-83, and 93-113; these read IIWQYIRAFVLIYACLYAGIF, LLPITIPGSIIGMLILFVLLA, GCYVLIRYMALLFVPIGVGVM, and FGPVVVSCAISTLVVFVVVSW.

The protein belongs to the UPF0299 family.

It localises to the cell inner membrane. This chain is UPF0299 membrane protein YohJ, found in Salmonella arizonae (strain ATCC BAA-731 / CDC346-86 / RSK2980).